The primary structure comprises 404 residues: Lupus La protein homolog (404 aa).

In terms of domain architecture, HTH La-type RNA-binding spans 7–99 (NEKMAALEAK…RRSPSKPLPE (93 aa)). Phosphoserine is present on residues Ser92 and Ser94. An RRM domain is found at 111–187 (RSVYIKGFPT…TDLLILFKED (77 aa)). Residue Lys116 is modified to N6-acetyllysine. A Phosphothreonine modification is found at Thr120. Position 128 is an N6-acetyllysine (Lys128). A Phosphoserine modification is found at Ser225. A xRRM domain is found at 227 to 348 (EEKIGCLLKF…KGKGNKAAQA (122 aa)). Residues Lys328 and Lys341 each carry the N6-acetyllysine modification. The segment covering 329–342 (WKSKGRRFKGKGKG) has biased composition (basic residues). The tract at residues 329–404 (WKSKGRRFKG…QKTENGAGDQ (76 aa)) is disordered. Low complexity predominate over residues 343-354 (NKAAQAGSAKGK). The residue at position 360 (Lys360) is an N6-acetyllysine. Thr362 is modified (phosphothreonine). Residue Ser366 is modified to Phosphoserine. Positions 381 to 391 (RAREETDKEPP) are enriched in basic and acidic residues.

Interacts with DDX15. May interact with RUFY1. Post-translationally, phosphorylated in the C-terminal part of the protein.

It is found in the nucleus. Binds to the 3' poly(U) terminus of nascent RNA polymerase III transcripts, protecting them from exonuclease digestion and facilitating their folding and maturation. This chain is Lupus La protein homolog (SSB), found in Bos taurus (Bovine).